The primary structure comprises 420 residues: MEKFFIVGSHGLKGEIKVSGAKNSALPIIAATLLTREPCVLENIPKLEDVNIMLSILKRLGSKVEFGQLLTIQNNRINELIIPEELARKIRASNLFLGPLVARFQEGVVPLPGGCNIGNRPMDLHLKGLRLMGAEVEEKSGFIRARAKKLKGAEIHLDFPSVGATENLMMAAALAQGTTIIRNAAREPEIVDLQNFLNLMGAKVKGAGTDIIKITGVNQLKGVTHKIIPDRIEAGTHMVMAAATQSDIIISGVIPEHLEAVMAKLKEAGALITSGGDWVRVTGKSIIKPVDIKTMPYPGFPTDMQPQILALLTLAQGTSIISEGVFDNRFKHVEELRRMGADIRLESRIAVIKGVPKLTGASVIAHDLRAAAALVIAGLAAEGMTVLEGIKNLDRGYENLDLKYQLIGAQIKRVNGEEKY.

Position 22–23 (22–23 (KN)) interacts with phosphoenolpyruvate. Residue R91 coordinates UDP-N-acetyl-alpha-D-glucosamine. C115 (proton donor) is an active-site residue. At C115 the chain carries 2-(S-cysteinyl)pyruvic acid O-phosphothioketal. Residues 120-124 (RPMDL), D303, and V325 each bind UDP-N-acetyl-alpha-D-glucosamine.

It belongs to the EPSP synthase family. MurA subfamily.

The protein localises to the cytoplasm. The catalysed reaction is phosphoenolpyruvate + UDP-N-acetyl-alpha-D-glucosamine = UDP-N-acetyl-3-O-(1-carboxyvinyl)-alpha-D-glucosamine + phosphate. It functions in the pathway cell wall biogenesis; peptidoglycan biosynthesis. In terms of biological role, cell wall formation. Adds enolpyruvyl to UDP-N-acetylglucosamine. This chain is UDP-N-acetylglucosamine 1-carboxyvinyltransferase 1, found in Carboxydothermus hydrogenoformans (strain ATCC BAA-161 / DSM 6008 / Z-2901).